The sequence spans 83 residues: Small ribosomal subunit protein bS16 (83 aa).

It belongs to the bacterial ribosomal protein bS16 family.

In Shewanella woodyi (strain ATCC 51908 / MS32), this protein is Small ribosomal subunit protein bS16.